A 264-amino-acid chain; its full sequence is tRNA pseudouridine synthase A (264 aa).

The active-site Nucleophile is aspartate 51. Residue tyrosine 109 coordinates substrate.

Belongs to the tRNA pseudouridine synthase TruA family. As to quaternary structure, homodimer.

It catalyses the reaction uridine(38/39/40) in tRNA = pseudouridine(38/39/40) in tRNA. Formation of pseudouridine at positions 38, 39 and 40 in the anticodon stem and loop of transfer RNAs. In Vibrio campbellii (strain ATCC BAA-1116), this protein is tRNA pseudouridine synthase A.